We begin with the raw amino-acid sequence, 500 residues long: MRLQAVTAVAAWAVASACQSLPGTRTIWSRDADYKELSEKLSPSAKAYYPGSDEFEKANTRWSNLEVPTVNIVIVPGNENDVVETVKFANKKGLPFLAWNSAHGAMTTLGQMDSGIEIYLDQLSGVEIAEDGKTVTIAGGTKSKLVTDTLWAAGKQTVTGACECVGYIGPALGGGHGWLQGRHGTIGDQFESANIVLANGTLTSIDSSSDLWWAIKGAGHNFGIVTSVTSKTYDIEHKDWAIEILTFSGSKVVELYEAVNTHLLKNGTQPTDLINWSYWVNVPSADANNPVIQILIIQEGVNTVDSAYTTPFHSLSPITKEAHSGSYTDLAKWVGITTTDEPCQKTGAMNPRFPIYLETYNPQAQKKAFELFSDAIRGDSIFNGSLFAFDGYSTQGVRAIDEKSTAFAFRNQNVLTAPLISYMPDGPELDEKVAKLGNQLRQILHEGTGREHIPAYVNYANGDEGPEQWYGSESWRQSKLQSLKKKYDPNGMFSFYGPIA.

The N-terminal stretch at 1 to 20 (MRLQAVTAVAAWAVASACQS) is a signal peptide. One can recognise an FAD-binding PCMH-type domain in the interval 65–235 (LEVPTVNIVI…TSVTSKTYDI (171 aa)). Asn-199, Asn-266, Asn-275, and Asn-383 each carry an N-linked (GlcNAc...) asparagine glycan.

It belongs to the oxygen-dependent FAD-linked oxidoreductase family. Requires FAD as cofactor.

Its pathway is pigment biosynthesis. Functionally, FAD-linked oxidoreductase; part of the gene cluster that mediates the biosynthesis of the yellow pigment chrysogine. the NRPS chyA mediates the condensation of anthranilic acid and alanine into the intermediate 2-(2-aminopropanamido)benzoic acid. The remainder of the pathway is highly branched yielding at least 13 chrysogine-related compounds. The malonyl transferase chyE converts 2-(2-aminopropanamido)benzoic acid and 2-(2-aminopropanamido)benzamidine into 2-(2-(2-carboxyacetamido)propanamido)benzoic acid and 3-((1-((2-carbamoylphenyl)amino)-1-oxopropan-2-yl)amino)-3-oxopropanoic acid, respectively. ChyD is an amidase, being responsible for the amidation of the carboxylic acid moiety of 2-(2-aminopropanamido)benzoic acid, 2-(2-(2-carboxyacetamido)propanamido)benzoic acid and 2-(2-((4-amino-1-carboxy-4-oxobutyl)amino)propanamido)benzoic acid. ChyC is involved in the same reactions as ChyD, but plays a more minor role in the amidation reactions compared to chyD. The oxidoreductases chyH and chyM are involved in oxidation reactions that form N-pyruvoylanthranilamide from 2-(2-aminopropanamido)benzamidine and (1-((2-carbamoylphenyl)amino)-1-oxopropan-2-yl)glutamine, respectively. N-pyruvoylanthranilamide is further converted via two further branches in the pathway, yielding chrysogine and additional chrysogine-related coumpounds. Chrysogine is likely formed by a spontaneous ring closure from N-pyruvoylanthranilamide. This is FAD-linked oxidoreductase chyH from Penicillium rubens (strain ATCC 28089 / DSM 1075 / NRRL 1951 / Wisconsin 54-1255) (Penicillium chrysogenum).